The primary structure comprises 171 residues: ATP synthase subunit b (171 aa).

The chain crosses the membrane as a helical span at residues 24–44 (INLVIVIGVLYWFLKGFLGGI).

This sequence belongs to the ATPase B chain family. In terms of assembly, F-type ATPases have 2 components, F(1) - the catalytic core - and F(0) - the membrane proton channel. F(1) has five subunits: alpha(3), beta(3), gamma(1), delta(1), epsilon(1). F(0) has four main subunits: a(1), b(1), b'(1) and c(10-14). The alpha and beta chains form an alternating ring which encloses part of the gamma chain. F(1) is attached to F(0) by a central stalk formed by the gamma and epsilon chains, while a peripheral stalk is formed by the delta, b and b' chains.

It is found in the cellular thylakoid membrane. In terms of biological role, f(1)F(0) ATP synthase produces ATP from ADP in the presence of a proton or sodium gradient. F-type ATPases consist of two structural domains, F(1) containing the extramembraneous catalytic core and F(0) containing the membrane proton channel, linked together by a central stalk and a peripheral stalk. During catalysis, ATP synthesis in the catalytic domain of F(1) is coupled via a rotary mechanism of the central stalk subunits to proton translocation. Its function is as follows. Component of the F(0) channel, it forms part of the peripheral stalk, linking F(1) to F(0). The protein is ATP synthase subunit b of Synechococcus sp. (strain WH7803).